We begin with the raw amino-acid sequence, 329 residues long: Ribosomal protein L11 methyltransferase (329 aa).

The S-adenosyl-L-methionine site is built by Thr-177, Gly-198, Asp-220, and Asn-264.

This sequence belongs to the methyltransferase superfamily. PrmA family.

Its subcellular location is the cytoplasm. It carries out the reaction L-lysyl-[protein] + 3 S-adenosyl-L-methionine = N(6),N(6),N(6)-trimethyl-L-lysyl-[protein] + 3 S-adenosyl-L-homocysteine + 3 H(+). In terms of biological role, methylates ribosomal protein L11. This is Ribosomal protein L11 methyltransferase from Helicobacter pylori (strain Shi470).